The chain runs to 391 residues: Apolipoprotein A-IV (391 aa).

Residues 1-20 (MFLKAVVLTVALVAITGTQA) form the signal peptide. Tandem repeats lie at residues 33–54 (DYFT…KTDV), 60–81 (TLFQ…NKLV), 82–103 (PFAV…EEIQ), 115–136 (PHAN…EHLR), 137–158 (PYAT…RQLT), 159–180 (PYIQ…SSMV), 181–202 (PFAN…GQLT), 203–224 (PRAN…SRLA), 225–246 (PLAE…FQMK), 247–268 (KNAE…KNLA), 269–286 (PLVE…EGLQ), 287–308 (KSLE…RAVE), and 309–330 (PLGD…QQLG). Residues 33 to 330 (DYFTQLSNNA…QMEKFRQQLG (298 aa)) are 13 X 22 AA approximate tandem repeats. Ser-333 is subject to Phosphoserine. The disordered stretch occupies residues 354–391 (FMSTLQKKGSPDQPLALPLPEQVQEQVQEQVQPKPLES). Residues 371-391 (PLPEQVQEQVQEQVQPKPLES) show a composition bias toward low complexity.

It belongs to the apolipoprotein A1/A4/E family. In terms of assembly, homodimer. As to expression, secreted in plasma.

The protein localises to the secreted. In terms of biological role, may have a role in chylomicrons and VLDL secretion and catabolism. Required for efficient activation of lipoprotein lipase by ApoC-II; potent activator of LCAT. Apoa-IV is a major component of HDL and chylomicrons. This Rattus norvegicus (Rat) protein is Apolipoprotein A-IV (Apoa4).